The chain runs to 405 residues: Probable tRNA sulfurtransferase (405 aa).

The 106-residue stretch at 60–165 (QEVSASLKKI…PDAAYISHEE (106 aa)) folds into the THUMP domain. Residues 183-184 (ML), 208-209 (HF), Arg-265, Gly-287, and Gln-296 contribute to the ATP site.

Belongs to the ThiI family.

It localises to the cytoplasm. It catalyses the reaction [ThiI sulfur-carrier protein]-S-sulfanyl-L-cysteine + a uridine in tRNA + 2 reduced [2Fe-2S]-[ferredoxin] + ATP + H(+) = [ThiI sulfur-carrier protein]-L-cysteine + a 4-thiouridine in tRNA + 2 oxidized [2Fe-2S]-[ferredoxin] + AMP + diphosphate. It carries out the reaction [ThiS sulfur-carrier protein]-C-terminal Gly-Gly-AMP + S-sulfanyl-L-cysteinyl-[cysteine desulfurase] + AH2 = [ThiS sulfur-carrier protein]-C-terminal-Gly-aminoethanethioate + L-cysteinyl-[cysteine desulfurase] + A + AMP + 2 H(+). Its pathway is cofactor biosynthesis; thiamine diphosphate biosynthesis. Its function is as follows. Catalyzes the ATP-dependent transfer of a sulfur to tRNA to produce 4-thiouridine in position 8 of tRNAs, which functions as a near-UV photosensor. Also catalyzes the transfer of sulfur to the sulfur carrier protein ThiS, forming ThiS-thiocarboxylate. This is a step in the synthesis of thiazole, in the thiamine biosynthesis pathway. The sulfur is donated as persulfide by IscS. The sequence is that of Probable tRNA sulfurtransferase from Streptococcus suis (strain 98HAH33).